The sequence spans 378 residues: Chaperone protein DnaJ (378 aa).

One can recognise a J domain in the interval 3–67 (DFYDTLGVNR…EKRARYDQFG (65 aa)). The CR-type zinc-finger motif lies at 132 to 214 (GQEREIKIPH…CGGQGVKQVR (83 aa)). Residues cysteine 145, cysteine 148, cysteine 162, cysteine 165, cysteine 188, cysteine 191, cysteine 202, and cysteine 205 each contribute to the Zn(2+) site. CXXCXGXG motif repeat units lie at residues 145-152 (CDVCRGTG), 162-169 (CSTCGGAG), 188-195 (CPTCSGSG), and 202-209 (CQSCGGQG).

The protein belongs to the DnaJ family. Homodimer. Zn(2+) is required as a cofactor.

The protein resides in the cytoplasm. In terms of biological role, participates actively in the response to hyperosmotic and heat shock by preventing the aggregation of stress-denatured proteins and by disaggregating proteins, also in an autonomous, DnaK-independent fashion. Unfolded proteins bind initially to DnaJ; upon interaction with the DnaJ-bound protein, DnaK hydrolyzes its bound ATP, resulting in the formation of a stable complex. GrpE releases ADP from DnaK; ATP binding to DnaK triggers the release of the substrate protein, thus completing the reaction cycle. Several rounds of ATP-dependent interactions between DnaJ, DnaK and GrpE are required for fully efficient folding. Also involved, together with DnaK and GrpE, in the DNA replication of plasmids through activation of initiation proteins. The protein is Chaperone protein DnaJ of Prochlorococcus marinus (strain SARG / CCMP1375 / SS120).